The primary structure comprises 405 residues: Na(+)-translocating NADH-quinone reductase subunit F (405 aa).

A helical membrane pass occupies residues 3-23 (IILGIVMFTVIVLVLALMILF). One can recognise a 2Fe-2S ferredoxin-type domain in the interval 32 to 124 (GDITIKVNGE…DMDIEVPEEV (93 aa)). [2Fe-2S] cluster contacts are provided by C67, C73, C76, and C108. Residues 127-267 (VKKWECTVIS…SGPFGEFFAK (141 aa)) form the FAD-binding FR-type domain. Residues 270–387 (DAEMVFIGGG…PIMNQSVIKM (118 aa)) form a catalytic region.

Belongs to the NqrF family. Composed of six subunits; NqrA, NqrB, NqrC, NqrD, NqrE and NqrF. It depends on [2Fe-2S] cluster as a cofactor. FAD serves as cofactor.

The protein localises to the cell inner membrane. It carries out the reaction a ubiquinone + n Na(+)(in) + NADH + H(+) = a ubiquinol + n Na(+)(out) + NAD(+). In terms of biological role, NQR complex catalyzes the reduction of ubiquinone-1 to ubiquinol by two successive reactions, coupled with the transport of Na(+) ions from the cytoplasm to the periplasm. The first step is catalyzed by NqrF, which accepts electrons from NADH and reduces ubiquinone-1 to ubisemiquinone by a one-electron transfer pathway. This is Na(+)-translocating NADH-quinone reductase subunit F from Neisseria meningitidis serogroup B (strain ATCC BAA-335 / MC58).